A 305-amino-acid chain; its full sequence is Probable lipid kinase YegS-like (305 aa).

In terms of domain architecture, DAGKc spans 1–129; that stretch reads MTQRRAMLIL…VDLGEVGGKL (129 aa). Residues Thr-39, 65–71, and Thr-92 each bind ATP; that span reads GDGTLRD. Positions 210, 213, and 215 each coordinate Mg(2+). The active-site Proton acceptor is the Glu-268.

This sequence belongs to the diacylglycerol/lipid kinase family. YegS lipid kinase subfamily. Mg(2+) serves as cofactor. It depends on Ca(2+) as a cofactor.

The protein localises to the cytoplasm. Probably phosphorylates lipids; the in vivo substrate is unknown. The polypeptide is Probable lipid kinase YegS-like (Pseudomonas savastanoi pv. phaseolicola (strain 1448A / Race 6) (Pseudomonas syringae pv. phaseolicola (strain 1448A / Race 6))).